The primary structure comprises 382 residues: Intermediate transcription factor 3 large subunit (382 aa).

Belongs to the poxviruses A23 family. As to quaternary structure, heterodimer of a 45 kDa and a 32 kDa subunit.

In terms of biological role, acts with RNA polymerase to initiate transcription from intermediate gene promoters. This Oryctolagus cuniculus (Rabbit) protein is Intermediate transcription factor 3 large subunit (VITF3L).